The chain runs to 522 residues: Putative zinc finger protein 286B (522 aa).

The interval 1-30 is disordered; sequence METDLAEMPEKGVLSSQDSPHFQEKSTEEG. 10 C2H2-type zinc fingers span residues 244–266, 272–294, 299–321, 327–349, 355–377, 383–405, 411–433, 439–461, 467–489, and 495–517; these read HKCNDCGELFTCHSVHIQHQRVH, YTCNECGKSFSHRANLTKHQRTH, FECRECKKTFTESSSLATHQRIH, YECNECGKGFNRSTHLVQHQLIH, YECNECDKAFIHSSALIKHQRTH, YKCQECGKAFSHCSSLTKHQRVH, YECSECGKTFSQSTHLVQHQRIH, YECSECGKTFSQSSNFAKHQRIH, YKCSECGKAFIHSSALIQHQRTH, and FRCNECGKSFKCSSSLIRHQRVH.

This sequence belongs to the krueppel C2H2-type zinc-finger protein family.

Its subcellular location is the nucleus. Its function is as follows. May be involved in transcriptional regulation. The sequence is that of Putative zinc finger protein 286B (ZNF286B) from Homo sapiens (Human).